A 202-amino-acid polypeptide reads, in one-letter code: Crossover junction endodeoxyribonuclease RuvC (202 aa).

Active-site residues include Asp7, Glu68, and Asp141. Mg(2+)-binding residues include Asp7, Glu68, and Asp141.

This sequence belongs to the RuvC family. In terms of assembly, homodimer which binds Holliday junction (HJ) DNA. The HJ becomes 2-fold symmetrical on binding to RuvC with unstacked arms; it has a different conformation from HJ DNA in complex with RuvA. In the full resolvosome a probable DNA-RuvA(4)-RuvB(12)-RuvC(2) complex forms which resolves the HJ. Requires Mg(2+) as cofactor.

The protein localises to the cytoplasm. It carries out the reaction Endonucleolytic cleavage at a junction such as a reciprocal single-stranded crossover between two homologous DNA duplexes (Holliday junction).. In terms of biological role, the RuvA-RuvB-RuvC complex processes Holliday junction (HJ) DNA during genetic recombination and DNA repair. Endonuclease that resolves HJ intermediates. Cleaves cruciform DNA by making single-stranded nicks across the HJ at symmetrical positions within the homologous arms, yielding a 5'-phosphate and a 3'-hydroxyl group; requires a central core of homology in the junction. The consensus cleavage sequence is 5'-(A/T)TT(C/G)-3'. Cleavage occurs on the 3'-side of the TT dinucleotide at the point of strand exchange. HJ branch migration catalyzed by RuvA-RuvB allows RuvC to scan DNA until it finds its consensus sequence, where it cleaves and resolves the cruciform DNA. The sequence is that of Crossover junction endodeoxyribonuclease RuvC from Clavibacter michiganensis subsp. michiganensis (strain NCPPB 382).